The sequence spans 614 residues: Vitamin B12 transporter BtuB (614 aa).

A signal peptide spans 1 to 20; the sequence is MIKKATLLTAFSVTAFSAWA. Residues 26–33 carry the TonB box motif; the sequence is DTLVVTAN. The TBDR plug domain occupies 38–152; that stretch reads PRSAVLAPVT…IGGVVNIITT (115 aa). Cyanocob(III)alamin-binding positions include Ser85, Asn92, and 110 to 111; that span reads VS. The TBDR beta-barrel domain occupies 155–614; that stretch reads NPGTELTAGW…EYTLSGSYTF (460 aa). 3 beta stranded membrane-spanning segments follow: residues 158-165, 169-178, and 184-195; these read TELTAGWG, YQNYDISTQQ, and TRATLIGDYEYT. Positions 199, 211, 213, and 215 each coordinate Ca(2+). The next 2 membrane-spanning stretches (beta stranded) occupy residues 217 to 227 and 232 to 248; these read FLSKTLYGALE and DRWS…NRTD. 2 residues coordinate Ca(2+): Tyr249 and Asp250. Ala251 contributes to the cyanocob(III)alamin binding site. Asp261 lines the Ca(2+) pocket. 14 beta stranded membrane passes run 263–277, 279–296, 309–325, 328–337, 353–369, 371–381, 385–400, 403–417, 434–443, 449–458, 473–490, 494–509, 517–529, and 535–550; these read RKLY…LHFN, ERIQ…KDYN, TLDE…NSVV, HGNVGAGVDW, YDQR…QQLG, FTLEAAARSDD, FGRH…WEFI, YRFI…KAPN, KSKQWEGAFE, VSWRISGYRN, YYNE…TANF, PLTH…ARNA, RRSK…QLDW, and DWGM…YDSD. Cyanocob(III)alamin is bound at residue Thr309. Arg517 provides a ligand contact to cyanocob(III)alamin. Tyr551 is a binding site for cyanocob(III)alamin. The next 3 beta stranded transmembrane spans lie at 558 to 572, 585 to 596, and 602 to 614; these read TVKM…LTVA, IANLFDKDYETV, and AGRE…SYTF. The short motif at 597–614 is the TonB C-terminal box element; it reads YGYQTAGREYTLSGSYTF.

This sequence belongs to the TonB-dependent receptor family. BtuB (TC 1.B.14.3.1) subfamily.

Its subcellular location is the cell outer membrane. Functionally, involved in the active translocation of vitamin B12 (cyanocobalamin) across the outer membrane to the periplasmic space. It derives its energy for transport by interacting with the trans-periplasmic membrane protein TonB. The chain is Vitamin B12 transporter BtuB from Salmonella typhimurium (strain LT2 / SGSC1412 / ATCC 700720).